The primary structure comprises 193 residues: tRNA(Phe) 7-((3-amino-3-carboxypropyl)-4-demethylwyosine(37)-N(4))-methyltransferase (193 aa).

The protein belongs to the TYW3 family.

The catalysed reaction is 4-demethyl-7-[(3S)-3-amino-3-carboxypropyl]wyosine(37) in tRNA(Phe) + S-adenosyl-L-methionine = 7-[(3S)-3-amino-3-carboxypropyl]wyosine(37) in tRNA(Phe) + S-adenosyl-L-homocysteine + H(+). S-adenosyl-L-methionine-dependent methyltransferase that acts as a component of the wyosine derivatives biosynthesis pathway. Probably methylates N-4 position of wybutosine-86 to produce wybutosine-72. In Methanocaldococcus jannaschii (strain ATCC 43067 / DSM 2661 / JAL-1 / JCM 10045 / NBRC 100440) (Methanococcus jannaschii), this protein is tRNA(Phe) 7-((3-amino-3-carboxypropyl)-4-demethylwyosine(37)-N(4))-methyltransferase.